The sequence spans 577 residues: Proline--tRNA ligase (577 aa).

This sequence belongs to the class-II aminoacyl-tRNA synthetase family. ProS type 1 subfamily. As to quaternary structure, homodimer.

Its subcellular location is the cytoplasm. The enzyme catalyses tRNA(Pro) + L-proline + ATP = L-prolyl-tRNA(Pro) + AMP + diphosphate. In terms of biological role, catalyzes the attachment of proline to tRNA(Pro) in a two-step reaction: proline is first activated by ATP to form Pro-AMP and then transferred to the acceptor end of tRNA(Pro). As ProRS can inadvertently accommodate and process non-cognate amino acids such as alanine and cysteine, to avoid such errors it has two additional distinct editing activities against alanine. One activity is designated as 'pretransfer' editing and involves the tRNA(Pro)-independent hydrolysis of activated Ala-AMP. The other activity is designated 'posttransfer' editing and involves deacylation of mischarged Ala-tRNA(Pro). The misacylated Cys-tRNA(Pro) is not edited by ProRS. The protein is Proline--tRNA ligase of Herminiimonas arsenicoxydans.